Reading from the N-terminus, the 207-residue chain is LexA repressor (207 aa).

The H-T-H motif DNA-binding region spans valine 33 to asparagine 52. Residues serine 129 and lysine 166 each act as for autocatalytic cleavage activity in the active site.

Belongs to the peptidase S24 family. As to quaternary structure, homodimer.

The enzyme catalyses Hydrolysis of Ala-|-Gly bond in repressor LexA.. Its function is as follows. Represses a number of genes involved in the response to DNA damage (SOS response), including recA and lexA. In the presence of single-stranded DNA, RecA interacts with LexA causing an autocatalytic cleavage which disrupts the DNA-binding part of LexA, leading to derepression of the SOS regulon and eventually DNA repair. This Oleidesulfovibrio alaskensis (strain ATCC BAA-1058 / DSM 17464 / G20) (Desulfovibrio alaskensis) protein is LexA repressor.